We begin with the raw amino-acid sequence, 501 residues long: Cytochrome P450 2J6 (501 aa).

A heme-binding site is contributed by Cys447.

This sequence belongs to the cytochrome P450 family. Heme is required as a cofactor.

Its subcellular location is the endoplasmic reticulum membrane. The protein resides in the microsome membrane. It catalyses the reaction an organic molecule + reduced [NADPH--hemoprotein reductase] + O2 = an alcohol + oxidized [NADPH--hemoprotein reductase] + H2O + H(+). The polypeptide is Cytochrome P450 2J6 (Cyp2j6) (Mus musculus (Mouse)).